The chain runs to 302 residues: RNA polymerase II holoenzyme cyclin-like subunit (302 aa).

One can recognise a Cyclin N-terminal domain in the interval 53 to 142; that stretch reads QQLIKLGKRM…VGECEFSLIS (90 aa).

This sequence belongs to the cyclin family. Cyclin C subfamily. In terms of assembly, component of the srb8-11 complex, a regulatory module of the Mediator complex.

It is found in the nucleus. Functionally, component of the srb8-11 complex. The srb8-11 complex is a regulatory module of the Mediator complex which is itself involved in regulation of basal and activated RNA polymerase II-dependent transcription. The srb8-11 complex may be involved in the transcriptional repression of a subset of genes regulated by Mediator. It may inhibit the association of the Mediator complex with RNA polymerase II to form the holoenzyme complex. The srb8-11 complex phosphorylates the C-terminal domain (CTD) of the largest subunit of RNA polymerase II. This Emericella nidulans (strain FGSC A4 / ATCC 38163 / CBS 112.46 / NRRL 194 / M139) (Aspergillus nidulans) protein is RNA polymerase II holoenzyme cyclin-like subunit (ssn8).